Reading from the N-terminus, the 676-residue chain is Vitamin K-dependent protein S (676 aa).

The signal sequence occupies residues 1 to 24 (MRVLGGRCGALLACLLLVLPVSEA). The propeptide occupies 25–41 (NFLSKQQASQVLVRKRR). A Gla domain is found at 42 to 87 (ANSLLEETKQGNLERECIEELCNKEEAREVFENDPETDYFYPKYLV). 4-carboxyglutamate occurs at positions 47, 48, 55, 57, 60, 61, 66, 67, 70, 73, and 77. Cys-58 and Cys-63 are disulfide-bonded. The tract at residues 88–116 (CLRSFQTGLFTAARQSTNAYPDLRSCVNA) is thrombin-sensitive. The EGF-like 1 domain maps to 117–155 (IPDQCSPLPCNEDGYMSCKDGKASFTCTCKPGWQGEKCE). 13 disulfides stabilise this stretch: Cys-121–Cys-134, Cys-126–Cys-143, Cys-145–Cys-154, Cys-161–Cys-175, Cys-171–Cys-184, Cys-186–Cys-199, Cys-205–Cys-217, Cys-212–Cys-226, Cys-228–Cys-241, Cys-247–Cys-256, Cys-252–Cys-265, Cys-267–Cys-282, and Cys-449–Cys-475. Asp-136 bears the (3R)-3-hydroxyaspartate mark. One can recognise an EGF-like 2; calcium-binding domain in the interval 157-200 (DINECKDPSNINGGCSQICDNTPGSYHCSCKNGFVMLSNKKDCK). Residues 201–242 (DVDECSLKPSICGTAVCKNIPGDFECECPEGYRYNLKSKSCE) enclose the EGF-like 3; calcium-binding domain. In terms of domain architecture, EGF-like 4; calcium-binding spans 243–283 (DIDECSENMCAQLCVNYPGGYTCYCDGKKGFKLAQDQKSCE). 2 Laminin G-like domains span residues 299-475 (LLYL…NKHC) and 484-666 (YYPG…AHSC). Residues Asn-499, Asn-509, and Asn-530 are each glycosylated (N-linked (GlcNAc...) asparagine). A disulfide bond links Cys-639 and Cys-666.

In terms of processing, the iron and 2-oxoglutarate dependent 3-hydroxylation of aspartate and asparagine is (R) stereospecific within EGF domains. In terms of tissue distribution, plasma.

It localises to the secreted. Its function is as follows. Anticoagulant plasma protein; it is a cofactor to activated protein C in the degradation of coagulation factors Va and VIIIa. It helps to prevent coagulation and stimulating fibrinolysis. This Homo sapiens (Human) protein is Vitamin K-dependent protein S (PROS1).